The chain runs to 525 residues: Arylsulfatase G (525 aa).

The first 16 residues, 1–16, serve as a signal peptide directing secretion; it reads MGWLFLKVLLAGVSFS. Ca(2+)-binding residues include D44, D45, and C84. The Nucleophile role is filled by C84. C84 is modified (3-oxoalanine (Cys)). An N-linked (GlcNAc...) asparagine glycan is attached at N117. K137 lines the substrate pocket. Residue H139 is part of the active site. Position 162 (S162) interacts with substrate. N-linked (GlcNAc...) asparagine glycosylation is present at N215. H251 is a binding site for substrate. Ca(2+)-binding residues include D302 and N303. N356 and N497 each carry an N-linked (GlcNAc...) asparagine glycan.

Belongs to the sulfatase family. It depends on Ca(2+) as a cofactor. In terms of processing, N-glycosylated. N-glycosylated with both high mannose and complex type sugars. Post-translationally, the conversion to 3-oxoalanine (also known as C-formylglycine, FGly), of a serine or cysteine residue in prokaryotes and of a cysteine residue in eukaryotes, is critical for catalytic activity. The 63-kDa precursor undergoes proteolytic processing in two steps, yielding two fragments in the first step (apparent molecular masses of 44 and 18 kDa). In the second step, the 44-kDa fragment is processed further to the 34- and 10-kDa chains. The 10-kDa chain is a cleavage product of the 44-kDa fragment but linked to the 18-kDa chain through a disulfide bridge. Widely expressed, with very low expression in brain, lung, heart and skeletal muscle.

Its subcellular location is the lysosome. It catalyses the reaction an aryl sulfate + H2O = a phenol + sulfate + H(+). The catalysed reaction is Hydrolysis of the 3-sulfate groups of the N-sulfo-D-glucosamine 3-O-sulfate units of heparin.. Its activity is regulated as follows. Inhibited by phosphate. The phosphate forms a covalent bond with the active site 3-oxoalanine. Displays arylsulfatase activity at acidic pH towards artificial substrates, such as p-nitrocatechol sulfate and also, but with a lower activity towards p-nitrophenyl sulfate and 4-methylumbelliferyl sulfate. Catalyzes the hydrolysis of the 3-sulfate groups of the N-sulfo-D-glucosamine 3-O-sulfate units of heparin. The protein is Arylsulfatase G (ARSG) of Homo sapiens (Human).